The chain runs to 306 residues: Acetyl-coenzyme A carboxylase carboxyl transferase subunit beta (306 aa).

Residues 25 to 294 form the CoA carboxyltransferase N-terminal domain; sequence LWIKDPTSGE…APEPSHAFSK (270 aa). The tract at residues 287 to 306 is disordered; that stretch reads EPSHAFSKDSQTQISKTKAA. Over residues 294–306 the composition is skewed to polar residues; that stretch reads KDSQTQISKTKAA.

It belongs to the AccD/PCCB family. Acetyl-CoA carboxylase is a heterohexamer composed of biotin carboxyl carrier protein (AccB), biotin carboxylase (AccC) and two subunits each of ACCase subunit alpha (AccA) and ACCase subunit beta (AccD).

The protein localises to the cytoplasm. It catalyses the reaction N(6)-carboxybiotinyl-L-lysyl-[protein] + acetyl-CoA = N(6)-biotinyl-L-lysyl-[protein] + malonyl-CoA. It participates in lipid metabolism; malonyl-CoA biosynthesis; malonyl-CoA from acetyl-CoA: step 1/1. Component of the acetyl coenzyme A carboxylase (ACC) complex. Biotin carboxylase (BC) catalyzes the carboxylation of biotin on its carrier protein (BCCP) and then the CO(2) group is transferred by the transcarboxylase to acetyl-CoA to form malonyl-CoA. This Bartonella bacilliformis (strain ATCC 35685 / KC583 / Herrer 020/F12,63) protein is Acetyl-coenzyme A carboxylase carboxyl transferase subunit beta.